Reading from the N-terminus, the 353-residue chain is Photosystem II D2 protein (353 aa).

Threonine 2 bears the N-acetylthreonine mark. The residue at position 2 (threonine 2) is a Phosphothreonine. A helical membrane pass occupies residues 41–61; that stretch reads CAYFALGGWFTGTTFVTSWYT. Histidine 118 serves as a coordination point for chlorophyll a. Residues 125 to 141 form a helical membrane-spanning segment; sequence GFMLRQFELARSVQLRP. Pheophytin a contacts are provided by glutamine 130 and asparagine 143. A helical membrane pass occupies residues 153-166; the sequence is VFVSVFLIYPLGQS. Histidine 198 lines the chlorophyll a pocket. Residues 208–228 form a helical membrane-spanning segment; it reads AALLCAIHGATVENTLFEDGD. Residues histidine 215 and phenylalanine 262 each coordinate a plastoquinone. Residue histidine 215 participates in Fe cation binding. A Fe cation-binding site is contributed by histidine 269. The chain crosses the membrane as a helical span at residues 279–295; it reads GLWMSALGVVGLALNLR.

The protein belongs to the reaction center PufL/M/PsbA/D family. In terms of assembly, PSII is composed of 1 copy each of membrane proteins PsbA, PsbB, PsbC, PsbD, PsbE, PsbF, PsbH, PsbI, PsbJ, PsbK, PsbL, PsbM, PsbT, PsbX, PsbY, PsbZ, Psb30/Ycf12, at least 3 peripheral proteins of the oxygen-evolving complex and a large number of cofactors. It forms dimeric complexes. The D1/D2 heterodimer binds P680, chlorophylls that are the primary electron donor of PSII, and subsequent electron acceptors. It shares a non-heme iron and each subunit binds pheophytin, quinone, additional chlorophylls, carotenoids and lipids. There is also a Cl(-1) ion associated with D1 and D2, which is required for oxygen evolution. The PSII complex binds additional chlorophylls, carotenoids and specific lipids. is required as a cofactor.

The protein resides in the plastid. It localises to the chloroplast thylakoid membrane. The catalysed reaction is 2 a plastoquinone + 4 hnu + 2 H2O = 2 a plastoquinol + O2. Photosystem II (PSII) is a light-driven water:plastoquinone oxidoreductase that uses light energy to abstract electrons from H(2)O, generating O(2) and a proton gradient subsequently used for ATP formation. It consists of a core antenna complex that captures photons, and an electron transfer chain that converts photonic excitation into a charge separation. The D1/D2 (PsbA/PsbD) reaction center heterodimer binds P680, the primary electron donor of PSII as well as several subsequent electron acceptors. D2 is needed for assembly of a stable PSII complex. In Populus trichocarpa (Western balsam poplar), this protein is Photosystem II D2 protein.